Here is a 465-residue protein sequence, read N- to C-terminus: Cysteine--tRNA ligase (465 aa).

Cysteine 30 is a Zn(2+) binding site. Positions 32 to 42 (PTVYDRAHLGN) match the 'HIGH' region motif. Positions 213, 238, and 242 each coordinate Zn(2+). The short motif at 271–275 (KMSKS) is the 'KMSKS' region element. Position 274 (lysine 274) interacts with ATP.

It belongs to the class-I aminoacyl-tRNA synthetase family. As to quaternary structure, monomer. It depends on Zn(2+) as a cofactor.

The protein resides in the cytoplasm. The enzyme catalyses tRNA(Cys) + L-cysteine + ATP = L-cysteinyl-tRNA(Cys) + AMP + diphosphate. The sequence is that of Cysteine--tRNA ligase from Ruegeria pomeroyi (strain ATCC 700808 / DSM 15171 / DSS-3) (Silicibacter pomeroyi).